Consider the following 204-residue polypeptide: dTTP/UTP pyrophosphatase (204 aa).

The Proton acceptor role is filled by D76.

Belongs to the Maf family. YhdE subfamily. Requires a divalent metal cation as cofactor.

It is found in the cytoplasm. It carries out the reaction dTTP + H2O = dTMP + diphosphate + H(+). It catalyses the reaction UTP + H2O = UMP + diphosphate + H(+). In terms of biological role, nucleoside triphosphate pyrophosphatase that hydrolyzes dTTP and UTP. May have a dual role in cell division arrest and in preventing the incorporation of modified nucleotides into cellular nucleic acids. This is dTTP/UTP pyrophosphatase from Salinibacter ruber (strain DSM 13855 / M31).